A 498-amino-acid polypeptide reads, in one-letter code: Aspartyl aminopeptidase (498 aa).

A Zn(2+)-binding site is contributed by His-91. Residue His-166 coordinates substrate. Zn(2+) is bound at residue Asp-274. Residue Glu-311 coordinates substrate. Zn(2+) is bound by residues Glu-312 and Asp-363. Substrate is bound by residues Asp-363, His-366, Lys-391, and Tyr-398. Residue His-463 participates in Zn(2+) binding.

It belongs to the peptidase M18 family. Tetrahedron-shaped homododecamer built from six homodimers. It depends on Zn(2+) as a cofactor. In terms of processing, the N-terminus is blocked.

It carries out the reaction Release of an N-terminal aspartate or glutamate from a peptide, with a preference for aspartate.. With respect to regulation, inhibited by zinc. Stimulated by calcium and bacitracin. This chain is Aspartyl aminopeptidase (dapA), found in Aspergillus oryzae (strain ATCC 42149 / RIB 40) (Yellow koji mold).